We begin with the raw amino-acid sequence, 192 residues long: MIMLTTSVAEAAHCLKQGQVLAYPTEAVWGLGCDPFNELAFRQILALKQRPIEKGVILLAGDVGQIEYLLADLDETIRAQVIESWTTRSVDERAITWLLPVSSDQVPTWITGQHHQVAVRVTNHPLCVALCHAFNGFIVSTSANPAGLEPARSLQEASAYFGQGLNYLNGDLGLSQQPSRIIDATTGRVIRD.

A YrdC-like domain is found at 5–192 (TTSVAEAAHC…DATTGRVIRD (188 aa)).

This sequence belongs to the SUA5 family. TsaC subfamily.

The protein localises to the cytoplasm. It carries out the reaction L-threonine + hydrogencarbonate + ATP = L-threonylcarbamoyladenylate + diphosphate + H2O. Required for the formation of a threonylcarbamoyl group on adenosine at position 37 (t(6)A37) in tRNAs that read codons beginning with adenine. Catalyzes the conversion of L-threonine, HCO(3)(-)/CO(2) and ATP to give threonylcarbamoyl-AMP (TC-AMP) as the acyladenylate intermediate, with the release of diphosphate. This Acinetobacter baylyi (strain ATCC 33305 / BD413 / ADP1) protein is Threonylcarbamoyl-AMP synthase.